The chain runs to 648 residues: Putative potassium transport protein DDB_G0292412 (648 aa).

Residues 48 to 68 (LFLLVILVQLGSTVLLTLPIV) form a helical membrane-spanning segment. Asparagine 81 is a glycosylation site (N-linked (GlcNAc...) asparagine). Disordered stretches follow at residues 106-145 (HDFK…DDND) and 223-261 (QQQQ…DSQS). Residues 110–129 (DDDDENDNNNNEENDDNDDE) show a composition bias toward acidic residues. Positions 199 to 227 (IIQQQQQQQQQQQQQQQQQQQQQQQQQQQ) form a coiled coil. N-linked (GlcNAc...) asparagine glycosylation is found at asparagine 239, asparagine 243, asparagine 247, asparagine 248, asparagine 254, and asparagine 257. The next 6 membrane-spanning stretches (helical) occupy residues 313-333 (LLVI…ISIG), 353-373 (GWWW…LALF), 385-405 (FLLI…PVFL), 443-463 (VQLF…MALL), 472-491 (NMNY…STRT), and 505-525 (SVLL…IISL). Asparagine 536 carries an N-linked (GlcNAc...) asparagine glycan. 3 helical membrane-spanning segments follow: residues 550 to 570 (IFVP…LLES), 571 to 591 (GVIT…NVGL), and 592 to 612 (SISI…MLAG).

The protein belongs to the TrkH potassium transport family.

It localises to the membrane. Its function is as follows. May function as a potassium transporter. The polypeptide is Putative potassium transport protein DDB_G0292412 (Dictyostelium discoideum (Social amoeba)).